A 467-amino-acid chain; its full sequence is Ribosomal protein uS12 methylthiotransferase RimO (467 aa).

Residues 1–27 (MTSNPPDLRPDLAPKPTFGTAPRPDQP) form a disordered region. Residues 27–137 (PTLGMVSLGC…VLDAVHAAVP (111 aa)) form the MTTase N-terminal domain. [4Fe-4S] cluster contacts are provided by cysteine 36, cysteine 72, cysteine 101, cysteine 168, cysteine 172, and cysteine 175. The 244-residue stretch at 154 to 397 (LTPRHFSYLK…MEKAQAISEA (244 aa)) folds into the Radical SAM core domain. The TRAM domain occupies 400–467 (ASKVGQTLQV…GEYDLWGALR (68 aa)).

It belongs to the methylthiotransferase family. RimO subfamily. Requires [4Fe-4S] cluster as cofactor.

The protein resides in the cytoplasm. The enzyme catalyses L-aspartate(89)-[ribosomal protein uS12]-hydrogen + (sulfur carrier)-SH + AH2 + 2 S-adenosyl-L-methionine = 3-methylsulfanyl-L-aspartate(89)-[ribosomal protein uS12]-hydrogen + (sulfur carrier)-H + 5'-deoxyadenosine + L-methionine + A + S-adenosyl-L-homocysteine + 2 H(+). Its function is as follows. Catalyzes the methylthiolation of an aspartic acid residue of ribosomal protein uS12. This chain is Ribosomal protein uS12 methylthiotransferase RimO, found in Ruegeria sp. (strain TM1040) (Silicibacter sp.).